The chain runs to 589 residues: Sulfite reductase [NADPH] hemoprotein beta-component (589 aa).

[4Fe-4S] cluster is bound by residues Cys-443, Cys-449, Cys-488, and Cys-492. Cys-492 contacts siroheme.

This sequence belongs to the nitrite and sulfite reductase 4Fe-4S domain family. In terms of assembly, alpha(8)-beta(8). The alpha component is a flavoprotein, the beta component is a hemoprotein. It depends on siroheme as a cofactor. The cofactor is [4Fe-4S] cluster.

It catalyses the reaction hydrogen sulfide + 3 NADP(+) + 3 H2O = sulfite + 3 NADPH + 4 H(+). The protein operates within sulfur metabolism; hydrogen sulfide biosynthesis; hydrogen sulfide from sulfite (NADPH route): step 1/1. Functionally, component of the sulfite reductase complex that catalyzes the 6-electron reduction of sulfite to sulfide. This is one of several activities required for the biosynthesis of L-cysteine from sulfate. This chain is Sulfite reductase [NADPH] hemoprotein beta-component, found in Neisseria meningitidis serogroup C / serotype 2a (strain ATCC 700532 / DSM 15464 / FAM18).